We begin with the raw amino-acid sequence, 63 residues long: Small ribosomal subunit protein eS27 (63 aa).

The Zn(2+) site is built by Cys-18, Cys-21, Cys-37, and Cys-40. The segment at Cys-18–Cys-40 adopts a C4-type zinc-finger fold.

It belongs to the eukaryotic ribosomal protein eS27 family. Part of the 30S ribosomal subunit. Zn(2+) is required as a cofactor.

The protein is Small ribosomal subunit protein eS27 of Methanothermobacter thermautotrophicus (strain ATCC 29096 / DSM 1053 / JCM 10044 / NBRC 100330 / Delta H) (Methanobacterium thermoautotrophicum).